Consider the following 303-residue polypeptide: D-alanine--D-alanine ligase (303 aa).

One can recognise an ATP-grasp domain in the interval 100-295 (KQLLRRHGIL…FPALIARLIE (196 aa)). 127-180 (GLGYPLFVKPNTGGSSLCLSRVTQPEGLAPALEAVFAHCGEAIVEPAIPGVEVT) is a binding site for ATP. Residues aspartate 249, glutamate 262, and asparagine 264 each contribute to the Mg(2+) site.

The protein belongs to the D-alanine--D-alanine ligase family. Mg(2+) serves as cofactor. Mn(2+) is required as a cofactor.

It localises to the cytoplasm. It carries out the reaction 2 D-alanine + ATP = D-alanyl-D-alanine + ADP + phosphate + H(+). Its pathway is cell wall biogenesis; peptidoglycan biosynthesis. Its function is as follows. Cell wall formation. The chain is D-alanine--D-alanine ligase from Nitratidesulfovibrio vulgaris (strain DP4) (Desulfovibrio vulgaris).